The primary structure comprises 217 residues: MAVVVKLSGRIFEDEELVLKYAEAIKSYGVKIAVVTGGGELARRYISAAKRGGASNTFQDLIGIYASRLNALLLISLLGDAYPKVPTNIEEFLEAWRSHRVVVAGGFQPGQSTATVAALVAEAAGASVLLNAANIDAVYSDDPRKNPKAERLPHLKYDEFERIVRSSSLPGGYELMDVWSISILRRNCITVYIFDGRRPEHIGAILRGENPGTKITC.

6–10 serves as a coordination point for ATP; the sequence is KLSGR. Gly38 is a UMP binding site. ATP is bound by residues Gly39 and Arg43. UMP is bound by residues Asp60 and 107–113; that span reads FQPGQST. ATP contacts are provided by Asn134, Tyr139, and Asp142.

The protein belongs to the UMP kinase family. Homohexamer.

It is found in the cytoplasm. The catalysed reaction is UMP + ATP = UDP + ADP. Its pathway is pyrimidine metabolism; CTP biosynthesis via de novo pathway; UDP from UMP (UMPK route): step 1/1. Inhibited by UTP. Functionally, catalyzes the reversible phosphorylation of UMP to UDP. The chain is Uridylate kinase from Pyrobaculum neutrophilum (strain DSM 2338 / JCM 9278 / NBRC 100436 / V24Sta) (Thermoproteus neutrophilus).